The sequence spans 485 residues: Mitochondria-eating protein (485 aa).

Residues 112-210 (TSHERELNEV…SILSSESSIL (99 aa)) are a coiled coil. 2 stretches are compositionally biased toward low complexity: residues 214–241 (LSRSRSPSPIRHSSRSSSPFARSESPTS) and 471–485 (RSRSPSPRRSGTPRF). Disordered stretches follow at residues 214–244 (LSRSRSPSPIRHSSRSSSPFARSESPTSAKL) and 451–485 (RSRSASPLRSHSDSPGHNLTRSRSPSPRRSGTPRF).

Belongs to the MIEAP family.

The protein resides in the cytoplasm. Its subcellular location is the mitochondrion outer membrane. It is found in the mitochondrion matrix. Its function is as follows. Key regulator of mitochondrial quality that mediates the repairing or degradation of unhealthy mitochondria in response to mitochondrial damage. Mediator of mitochondrial protein catabolic process (also named MALM) by mediating the degradation of damaged proteins inside mitochondria by promoting the accumulation in the mitochondrial matrix of hydrolases that are characteristic of the lysosomal lumen. Also involved in mitochondrion degradation of damaged mitochondria by promoting the formation of vacuole-like structures (named MIV), which engulf and degrade unhealthy mitochondria by accumulating lysosomes. Binds cardiolipin. May form molecular condensates (non-membrane-bounded organelles) within mitochondria that compartmentalize and promote cardiolipin metabolism. This Xenopus laevis (African clawed frog) protein is Mitochondria-eating protein (spata18).